We begin with the raw amino-acid sequence, 358 residues long: Protein ocs (358 aa).

This sequence belongs to the lysopine/nopaline/octopine/opine/vitopine dehydrogenases family.

It catalyses the reaction D-octopine + NAD(+) + H2O = L-arginine + pyruvate + NADH + H(+). The enzyme catalyses D-lysopine + NADP(+) + H2O = L-lysine + pyruvate + NADPH + H(+). Functionally, reductive condensation of pyruvate and arginine, lysine, histidine, or octopine to form octopine, lysopine, histopine, or octopinic acid, respectively. NADPH is the preferred cofactor, but NADH can also be used. The protein is Protein ocs (ocs) of Agrobacterium vitis (Rhizobium vitis).